Consider the following 405-residue polypeptide: tRNA (uracil(54)-C(5))-methyltransferase (405 aa).

Positions 61, 67, 70, and 137 each coordinate [4Fe-4S] cluster. Residues Gln252, Tyr278, Thr283, 299–300 (DS), Asp326, and Asp340 each bind S-adenosyl-L-methionine. Residue Cys367 is the Nucleophile of the active site. Glu399 serves as the catalytic Proton acceptor.

Belongs to the class I-like SAM-binding methyltransferase superfamily. RNA M5U methyltransferase family.

It catalyses the reaction uridine(54) in tRNA + S-adenosyl-L-methionine = 5-methyluridine(54) in tRNA + S-adenosyl-L-homocysteine + H(+). With respect to regulation, activated by magnesium ions. Its function is as follows. Catalyzes the formation of 5-methyl-uridine at position 54 (m5U54) in tRNA. The sequence is that of tRNA (uracil(54)-C(5))-methyltransferase from Pyrococcus abyssi (strain GE5 / Orsay).